The chain runs to 305 residues: Probable DNA-invertase y4cG (305 aa).

In terms of domain architecture, Resolvase/invertase-type recombinase catalytic spans Arg15–Gly148. Catalysis depends on Ser23, which acts as the O-(5'-phospho-DNA)-serine intermediate.

Belongs to the site-specific recombinase resolvase family.

This chain is Probable DNA-invertase y4cG, found in Sinorhizobium fredii (strain NBRC 101917 / NGR234).